Here is an 82-residue protein sequence, read N- to C-terminus: Turripeptide OL139 (82 aa).

The tract at residues 58 to 82 is disordered; it reads HRTTRDTADKTHGGSQRDRFFQSIA.

Post-translationally, contains 6 disulfide bonds. Expressed by the venom duct.

It is found in the secreted. Functionally, acts as a neurotoxin by inhibiting an ion channel. The protein is Turripeptide OL139 of Iotyrris olangoensis (Sea snail).